Here is a 220-residue protein sequence, read N- to C-terminus: UPF0319 protein CKO_02102 (220 aa).

A signal peptide spans 1-20 (MKTGIITMLFVLYLPVTAFA).

The protein belongs to the UPF0319 family.

In Citrobacter koseri (strain ATCC BAA-895 / CDC 4225-83 / SGSC4696), this protein is UPF0319 protein CKO_02102.